Reading from the N-terminus, the 627-residue chain is DNA-directed RNA polymerase subunit gamma (627 aa).

Residues C70, C72, C85, and C88 each coordinate Zn(2+). Mg(2+) contacts are provided by D468, D470, and D472.

Belongs to the RNA polymerase beta' chain family. RpoC1 subfamily. As to quaternary structure, in cyanobacteria the RNAP catalytic core is composed of 2 alpha, 1 beta, 1 beta', 1 gamma and 1 omega subunit. When a sigma factor is associated with the core the holoenzyme is formed, which can initiate transcription. Mg(2+) serves as cofactor. It depends on Zn(2+) as a cofactor.

It carries out the reaction RNA(n) + a ribonucleoside 5'-triphosphate = RNA(n+1) + diphosphate. DNA-dependent RNA polymerase catalyzes the transcription of DNA into RNA using the four ribonucleoside triphosphates as substrates. The polypeptide is DNA-directed RNA polymerase subunit gamma (Synechococcus sp. (strain JA-2-3B'a(2-13)) (Cyanobacteria bacterium Yellowstone B-Prime)).